We begin with the raw amino-acid sequence, 221 residues long: uncharacterized protein (221 aa).

This is an uncharacterized protein from Escherichia coli (strain K12).